Here is a 517-residue protein sequence, read N- to C-terminus: Perilipin-1 (517 aa).

Serine 81 bears the Phosphoserine mark. Threonine 85 carries the phosphothreonine modification. Phosphoserine is present on residues serine 126, serine 130, serine 132, serine 137, and serine 174. The segment at 195 to 216 (DKESAPSSGRQRTQKAPKAKPS) is disordered. Phosphothreonine is present on residues threonine 223, threonine 298, and threonine 300. Residues 286-320 (LAASQDESHDDQTDTEGEETDDEEEEEESEAEENV) form a disordered region. The segment at 290-321 (QDESHDDQTDTEGEETDDEEEEEESEAEENVL) is required for interaction with CIDEC. Residues 298-318 (TDTEGEETDDEEEEEESEAEE) show a composition bias toward acidic residues. 9 positions are modified to phosphoserine: serine 314, serine 384, serine 386, serine 410, serine 433, serine 439, serine 460, serine 492, and serine 494. A disordered region spans residues 425–490 (SAEAERKGSG…AMPREKPARR (66 aa)).

It belongs to the perilipin family. Interacts with ABHD5. Interacts with CIDEC. Interacts with AQP7. Post-translationally, major cAMP-dependent protein kinase-substrate in adipocytes, also dephosphorylated by PP1. When phosphorylated, may be maximally sensitive to HSL and when unphosphorylated, may play a role in the inhibition of lipolysis, by acting as a barrier in lipid droplet.

Its subcellular location is the endoplasmic reticulum. The protein localises to the lipid droplet. Functionally, modulator of adipocyte lipid metabolism. Coats lipid storage droplets to protect them from breakdown by hormone-sensitive lipase (HSL). Its absence may result in leanness. Plays a role in unilocular lipid droplet formation by activating CIDEC. Their interaction promotes lipid droplet enlargement and directional net neutral lipid transfer. May modulate lipolysis and triglyceride levels. This is Perilipin-1 (Plin1) from Mus musculus (Mouse).